We begin with the raw amino-acid sequence, 247 residues long: 3-deoxy-manno-octulosonate cytidylyltransferase (247 aa).

Belongs to the KdsB family.

The protein resides in the cytoplasm. It catalyses the reaction 3-deoxy-alpha-D-manno-oct-2-ulosonate + CTP = CMP-3-deoxy-beta-D-manno-octulosonate + diphosphate. Its pathway is nucleotide-sugar biosynthesis; CMP-3-deoxy-D-manno-octulosonate biosynthesis; CMP-3-deoxy-D-manno-octulosonate from 3-deoxy-D-manno-octulosonate and CTP: step 1/1. The protein operates within bacterial outer membrane biogenesis; lipopolysaccharide biosynthesis. Its function is as follows. Activates KDO (a required 8-carbon sugar) for incorporation into bacterial lipopolysaccharide in Gram-negative bacteria. This is 3-deoxy-manno-octulosonate cytidylyltransferase from Methylorubrum extorquens (strain CM4 / NCIMB 13688) (Methylobacterium extorquens).